The following is a 476-amino-acid chain: CDK5 and ABL1 enzyme substrate 2 (476 aa).

A disordered region spans residues 1–119 (MAAAAAGGAP…GLGLDGQRQR (119 aa)). Basic residues predominate over residues 30–40 (PRRRGDSRRRQ). The span at 65–96 (PAPPPPPPTEAREAPAPPPAPPGGLPGLPARP) shows a compositional bias: pro residues. Residues Ser128 and Ser206 each carry the phosphoserine modification. The interval 256-295 (DSHGLLPQPRPSIPRAPPGSRHKPVPTKSTPAGTELGSDG) is disordered. Over residues 263-272 (QPRPSIPRAP) the composition is skewed to pro residues.

It belongs to the cyclin family. In terms of assembly, binds to CDK3, CDK5 and ABL1. The C-terminal cyclin-box-like region binds to CDK5. Widely expressed.

Its function is as follows. Unknown. Probably involved in G1-S cell cycle transition. The protein is CDK5 and ABL1 enzyme substrate 2 (Cables2) of Mus musculus (Mouse).